A 253-amino-acid chain; its full sequence is GTP cyclohydrolase III 2 (253 aa).

Positions 102-125 are disordered; that stretch reads LRDAGSAQDENRQEALSHRSPPGF.

This sequence belongs to the archaeal-type GTP cyclohydrolase family.

The catalysed reaction is GTP + 3 H2O = 2-amino-5-formylamino-6-(5-phospho-D-ribosylamino)pyrimidin-4(3H)-one + 2 phosphate + 2 H(+). Catalyzes the formation of 2-amino-5-formylamino-6-ribofuranosylamino-4(3H)-pyrimidinone ribonucleotide monophosphate and inorganic phosphate from GTP. Also has an independent pyrophosphate phosphohydrolase activity. The protein is GTP cyclohydrolase III 2 (gch32) of Halobacterium salinarum (strain ATCC 700922 / JCM 11081 / NRC-1) (Halobacterium halobium).